The chain runs to 214 residues: Cytochrome c biogenesis ATP-binding export protein CcmA (214 aa).

Positions 4–214 constitute an ABC transporter domain; the sequence is LAVDQLTVSR…FDHGFDGAFL (211 aa). Residue 36–43 participates in ATP binding; it reads GPNGIGKT.

Belongs to the ABC transporter superfamily. CcmA exporter (TC 3.A.1.107) family. In terms of assembly, the complex is composed of two ATP-binding proteins (CcmA) and two transmembrane proteins (CcmB).

It is found in the cell inner membrane. The enzyme catalyses heme b(in) + ATP + H2O = heme b(out) + ADP + phosphate + H(+). Functionally, part of the ABC transporter complex CcmAB involved in the biogenesis of c-type cytochromes; once thought to export heme, this seems not to be the case, but its exact role is uncertain. Responsible for energy coupling to the transport system. This is Cytochrome c biogenesis ATP-binding export protein CcmA from Rhodobacter capsulatus (strain ATCC BAA-309 / NBRC 16581 / SB1003).